Consider the following 1139-residue polypeptide: Protein kinase C-like (1139 aa).

Residues 1 to 67 enclose the REM-1 1 domain; sequence MNEDEAIQNI…LRDIQLRKVG (67 aa). A disordered region spans residues 72-132; the sequence is GMSLGADDAG…PGPGAASKAR (61 aa). Residues 142 to 219 form the REM-1 2 domain; that stretch reads KYDTPYLGPR…LKRYEELHVD (78 aa). Positions 225-343 constitute a C2 domain; sequence AQDDDSINTP…MRRKRIEAEM (119 aa). Positions 349–404 are disordered; the sequence is VSADRMGSTGAPSQFPMSPTSGSFGGSPQAPGGGQGQAPGPFGDPAPQPQVVTGPI. A compositionally biased stretch (polar residues) spans 358–368; sequence GAPSQFPMSPT. Phorbol-ester/DAG-type zinc fingers lie at residues 454 to 502 and 522 to 572; these read GHKF…VTKC and PHRF…PDFC. Disordered regions lie at residues 590–637, 649–668, and 679–804; these read KQRQ…TPSA, QTSPQRPGQPGRAPSDLSAA, and QGRT…TDPG. The segment covering 594–614 has biased composition (polar residues); that stretch reads QKTTSLSEKTLRSGATKSPTT. Over residues 615–629 the composition is skewed to low complexity; that stretch reads AGHGSSASFSSAGAG. 2 stretches are compositionally biased toward pro residues: residues 723–734 and 743–760; these read AQPPAQQRPPQP and AQMPPQQPPPQQPLPPQP. The segment covering 761–793 has biased composition (low complexity); it reads GQQYQQQQPAAQKPQPQPPATAQGAAAGPPGSQ. The 260-residue stretch at 814–1073 folds into the Protein kinase domain; the sequence is FNFLAVLGKG…AQEVMSQPFF (260 aa). ATP is bound by residues 820–828 and Lys-843; that span reads LGKGNFGKV. The active-site Proton acceptor is Asp-939. Residues 1074-1139 form the AGC-kinase C-terminal domain; it reads RNINWDDIYH…RGFSYTADLD (66 aa).

Belongs to the protein kinase superfamily. AGC Ser/Thr protein kinase family. PKC subfamily.

It catalyses the reaction L-seryl-[protein] + ATP = O-phospho-L-seryl-[protein] + ADP + H(+). The enzyme catalyses L-threonyl-[protein] + ATP = O-phospho-L-threonyl-[protein] + ADP + H(+). Its activity is regulated as follows. Stimulated about twofold by phospholipids or phorbol esters. The polypeptide is Protein kinase C-like (pkc1) (Hypocrea jecorina (Trichoderma reesei)).